The chain runs to 414 residues: Multifunctional CCA protein (414 aa).

2 residues coordinate ATP: Gly8 and Arg11. 2 residues coordinate CTP: Gly8 and Arg11. Residues Glu21 and Asp23 each contribute to the Mg(2+) site. ATP-binding residues include Arg91, Arg137, and Arg140. 3 residues coordinate CTP: Arg91, Arg137, and Arg140. The HD domain maps to 228-329 (TGIHTLMTLA…LKLFDAIDVW (102 aa)).

It belongs to the tRNA nucleotidyltransferase/poly(A) polymerase family. Bacterial CCA-adding enzyme type 1 subfamily. In terms of assembly, monomer. Can also form homodimers and oligomers. It depends on Mg(2+) as a cofactor. Ni(2+) serves as cofactor.

It carries out the reaction a tRNA precursor + 2 CTP + ATP = a tRNA with a 3' CCA end + 3 diphosphate. It catalyses the reaction a tRNA with a 3' CCA end + 2 CTP + ATP = a tRNA with a 3' CCACCA end + 3 diphosphate. Functionally, catalyzes the addition and repair of the essential 3'-terminal CCA sequence in tRNAs without using a nucleic acid template. Adds these three nucleotides in the order of C, C, and A to the tRNA nucleotide-73, using CTP and ATP as substrates and producing inorganic pyrophosphate. tRNA 3'-terminal CCA addition is required both for tRNA processing and repair. Also involved in tRNA surveillance by mediating tandem CCA addition to generate a CCACCA at the 3' terminus of unstable tRNAs. While stable tRNAs receive only 3'-terminal CCA, unstable tRNAs are marked with CCACCA and rapidly degraded. This Yersinia enterocolitica serotype O:8 / biotype 1B (strain NCTC 13174 / 8081) protein is Multifunctional CCA protein.